A 248-amino-acid chain; its full sequence is 14-3-3 protein homolog 2 (248 aa).

The protein belongs to the 14-3-3 family.

This chain is 14-3-3 protein homolog 2, found in Echinococcus granulosus (Hydatid tapeworm).